The sequence spans 507 residues: MAFNFGAPSGTSGTAAATAAPAGGFGGFGTTSTTAGSAFSFSAPTNTGTTGLFGGTQNKGFGFGTGFGTTTGTSTGLGTGLGTGLGFGGFNTQQQQQTTLGGLFSQPTQAPTQSNQLINTASALSAPTLLGDERDAILAKWNQLQAFWGTGKGYFNNNIPPVEFTQENPFCRFKAVGYSCMPSNKDEDGLVVLVFNKKETEIRSQQQQLVESLHKVLGGNQTLTVNVEGTKTLPDDQTEVVIYVVERSPNGTSRRVPATTLYAHFEQANIKTQLQQLGVTLSMTRTELSPAQIKQLLQNPPAGVDPIIWEQAKVDNPDSEKLIPVPMVGFKELLRRLKVQDQMTKQHQTRLDIISEDISELQKNQTTSVAKIAQYKRKLMDLSHRTLQVLIKQEIQRKSGYAIQADEEQLRVQLDTIQGELNAPTQFKGRLNELMSQIRMQNHFGAVRSEERYYIDADLLREIKQHLKQQQEGLSHLISIIKDDLEDIKLVEHGLNETIHIRGGVFS.

A run of 9 repeats spans residues 5 to 6, 25 to 26, 28 to 29, 53 to 54, 61 to 62, 63 to 64, 67 to 68, 87 to 88, and 444 to 445. The interval 5 to 445 is 9 X 2 AA repeats of F-G; it reads FGAPSGTSGT…SQIRMQNHFG (441 aa).

Belongs to the NUP54 family. Component of the p62 complex, a complex composed of NUP62, NUP54, and the isoform p58 and isoform p45 of NUP58. Interacts with NUTF2. O-glycosylated.

Its subcellular location is the nucleus. The protein localises to the nuclear pore complex. It localises to the nucleus membrane. In terms of biological role, component of the nuclear pore complex, a complex required for the trafficking across the nuclear membrane. The polypeptide is Nucleoporin p54 (NUP54) (Homo sapiens (Human)).